The chain runs to 64 residues: Conotoxin Am1.1 (64 aa).

A signal peptide spans 1-22; the sequence is MSCLPVFVILLLLTASGPSVDA. A propeptide spanning residues 23-49 is cleaved from the precursor; the sequence is RLKTKDDVPLSSFRDNAKSTLRRLQDK. At Pro-60 the chain carries 4-hydroxyproline; partial; in major form.

The protein belongs to the conotoxin T superfamily. In terms of processing, contains 2 disulfide bonds. Expressed by the venom duct.

Its subcellular location is the secreted. Functionally, probable toxin that inhibits ion channels. The chain is Conotoxin Am1.1 from Conus amadis (Amadis cone).